Consider the following 583-residue polypeptide: Orphan steroid hormone receptor 2 (583 aa).

A DNA-binding region (nuclear receptor) is located at residues 84–159 (IELCAVCGDK…MGMKSDSVQC (76 aa)). 2 consecutive NR C4-type zinc fingers follow at residues 87–107 (CAVCGDKASGRHYGAISCEGC) and 123–142 (CRGNKDCQIIKHNRNRCQYC). The NR LBD domain maps to 248–563 (TLASVVTSLA…SIIPYILRME (316 aa)).

Belongs to the nuclear hormone receptor family. NR2 subfamily. Binds DNA as a monomer. Expressed uniformly in the early embryo. In contrast, larval expression is localized to the epaulettes and mouth epithelium. Expressed in multiple adult organs including lantern muscle, tubefeet, intestine, coelomocytes and gonads. In the adult ovaries and testes, expression is specifically localized to the smooth muscle epithelial layer of cells which surround the ovarioles and acini, respectively (at protein level).

The protein resides in the cytoplasm. It is found in the nucleus. Its function is as follows. Orphan nuclear receptor. Binds to the hormone response element in the upstream promoter region of the CYIIIB gene in vitro. Both isoform 1 and isoform 2 bind DNA. This is Orphan steroid hormone receptor 2 from Strongylocentrotus purpuratus (Purple sea urchin).